A 163-amino-acid chain; its full sequence is SsrA-binding protein (163 aa).

Over residues 135-156 (GKKEHDKRDDTKEREWKIEKSR) the composition is skewed to basic and acidic residues. The segment at 135 to 163 (GKKEHDKRDDTKEREWKIEKSRTMKHAAR) is disordered.

This sequence belongs to the SmpB family.

Its subcellular location is the cytoplasm. Required for rescue of stalled ribosomes mediated by trans-translation. Binds to transfer-messenger RNA (tmRNA), required for stable association of tmRNA with ribosomes. tmRNA and SmpB together mimic tRNA shape, replacing the anticodon stem-loop with SmpB. tmRNA is encoded by the ssrA gene; the 2 termini fold to resemble tRNA(Ala) and it encodes a 'tag peptide', a short internal open reading frame. During trans-translation Ala-aminoacylated tmRNA acts like a tRNA, entering the A-site of stalled ribosomes, displacing the stalled mRNA. The ribosome then switches to translate the ORF on the tmRNA; the nascent peptide is terminated with the 'tag peptide' encoded by the tmRNA and targeted for degradation. The ribosome is freed to recommence translation, which seems to be the essential function of trans-translation. This Shewanella loihica (strain ATCC BAA-1088 / PV-4) protein is SsrA-binding protein.